We begin with the raw amino-acid sequence, 530 residues long: Bifunctional purine biosynthesis protein PurH (530 aa).

The MGS-like domain maps to 1–147 (MPSIKRALIS…KNWKHVAIVT (147 aa)).

It belongs to the PurH family.

It carries out the reaction (6R)-10-formyltetrahydrofolate + 5-amino-1-(5-phospho-beta-D-ribosyl)imidazole-4-carboxamide = 5-formamido-1-(5-phospho-D-ribosyl)imidazole-4-carboxamide + (6S)-5,6,7,8-tetrahydrofolate. The enzyme catalyses IMP + H2O = 5-formamido-1-(5-phospho-D-ribosyl)imidazole-4-carboxamide. Its pathway is purine metabolism; IMP biosynthesis via de novo pathway; 5-formamido-1-(5-phospho-D-ribosyl)imidazole-4-carboxamide from 5-amino-1-(5-phospho-D-ribosyl)imidazole-4-carboxamide (10-formyl THF route): step 1/1. It participates in purine metabolism; IMP biosynthesis via de novo pathway; IMP from 5-formamido-1-(5-phospho-D-ribosyl)imidazole-4-carboxamide: step 1/1. The sequence is that of Bifunctional purine biosynthesis protein PurH from Neisseria meningitidis serogroup A / serotype 4A (strain DSM 15465 / Z2491).